Reading from the N-terminus, the 426-residue chain is RuvB-like protein 1 (426 aa).

An ATP-binding site is contributed by 62 to 69 (GPVGSGKT).

Belongs to the RuvB family. In terms of assembly, component of the SWR1 chromatin remodeling complex, the INO80 chromatin remodeling complex, and of the R2TP complex.

It localises to the nucleus. It carries out the reaction ATP + H2O = ADP + phosphate + H(+). DNA helicase which participates in several chromatin remodeling complexes, including the SWR1 and the INO80 complexes. The SWR1 complex mediates the ATP-dependent exchange of histone H2A for the H2A variant HZT1 leading to transcriptional regulation of selected genes by chromatin remodeling. The INO80 complex remodels chromatin by shifting nucleosomes and is involved in DNA repair. Also involved in pre-rRNA processing. This Encephalitozoon cuniculi (strain GB-M1) (Microsporidian parasite) protein is RuvB-like protein 1 (RVB1).